A 159-amino-acid chain; its full sequence is Ribosomal RNA large subunit methyltransferase H (159 aa).

Residues leucine 76, glycine 108, and 127 to 132 (FSRMTF) each bind S-adenosyl-L-methionine.

It belongs to the RNA methyltransferase RlmH family. In terms of assembly, homodimer.

Its subcellular location is the cytoplasm. It catalyses the reaction pseudouridine(1915) in 23S rRNA + S-adenosyl-L-methionine = N(3)-methylpseudouridine(1915) in 23S rRNA + S-adenosyl-L-homocysteine + H(+). Its function is as follows. Specifically methylates the pseudouridine at position 1915 (m3Psi1915) in 23S rRNA. The sequence is that of Ribosomal RNA large subunit methyltransferase H from Clostridioides difficile (strain 630) (Peptoclostridium difficile).